Here is a 211-residue protein sequence, read N- to C-terminus: Glycerol-3-phosphate acyltransferase (211 aa).

6 helical membrane-spanning segments follow: residues 10–30 (FYTWSIFLMSYLIGSIPFGLL), 63–83 (TLTLLCDILKGTVVVLVIKFL), 90–110 (SIIISLVGFFAFLGHLFPIWL), 126–146 (LGYYWPAAIVFIIVWIMFFIL), 152–172 (LSALIAVIITPIFVYFSYPHL), and 174–194 (AHCILVMMSIFVIIKHHANIA).

Belongs to the PlsY family. Probably interacts with PlsX.

The protein resides in the cell inner membrane. It catalyses the reaction an acyl phosphate + sn-glycerol 3-phosphate = a 1-acyl-sn-glycero-3-phosphate + phosphate. Its pathway is lipid metabolism; phospholipid metabolism. Catalyzes the transfer of an acyl group from acyl-phosphate (acyl-PO(4)) to glycerol-3-phosphate (G3P) to form lysophosphatidic acid (LPA). This enzyme utilizes acyl-phosphate as fatty acyl donor, but not acyl-CoA or acyl-ACP. This is Glycerol-3-phosphate acyltransferase from Bartonella quintana (strain Toulouse) (Rochalimaea quintana).